Consider the following 344-residue polypeptide: L-rhamnose-proton symporter (344 aa).

Helical transmembrane passes span 4–24 (AITM…CFYA), 38–58 (WSVG…ALLL), 68–88 (FSLS…IGNI), 101–121 (MGIG…TPII), 137–157 (TLLG…AGQL), 175–195 (LVLA…MNAA), 214–234 (LPSY…FCFI), 259–279 (VLLS…YAWG), 290–310 (ISWM…GLVL), and 323–343 (VLSL…IGMA).

The protein belongs to the L-rhamnose transporter (TC 2.A.7.6) family.

It is found in the cell inner membrane. It carries out the reaction L-rhamnopyranose(in) + H(+)(in) = L-rhamnopyranose(out) + H(+)(out). Uptake of L-rhamnose across the cytoplasmic membrane with the concomitant transport of protons into the cell (symport system). The polypeptide is L-rhamnose-proton symporter (Escherichia coli O9:H4 (strain HS)).